A 101-amino-acid chain; its full sequence is Parathymosin (101 aa).

The tract at residues 1–101 (MSEKSVEAAA…RQKTENGASA (101 aa)) is disordered. S2 bears the N-acetylserine mark. S2 bears the Phosphoserine mark. K4 bears the N6-acetyllysine mark. 2 positions are modified to phosphoserine: S5 and S13. Residues 13–37 (SAKDLKEKKDKVEEKAGRKERKKEV) are compositionally biased toward basic and acidic residues. An N6-acetyllysine modification is found at K15. Residues 38-74 (VEEEENGAEEEEEETAEDGEDDDEGDEEDEEEEEEDE) show a composition bias toward acidic residues. Position 52 is a phosphothreonine (T52). The residue at position 91 (K91) is an N6-acetyllysine.

Belongs to the pro/parathymosin family.

Its function is as follows. Parathymosin may mediate immune function by blocking the effect of prothymosin alpha which confers resistance to certain opportunistic infections. This is Parathymosin (Ptms) from Mus musculus (Mouse).